We begin with the raw amino-acid sequence, 283 residues long: Phosphatidylglycerol--prolipoprotein diacylglyceryl transferase (283 aa).

3 consecutive transmembrane segments (helical) span residues 14–34 (LGPL…ALFL), 56–76 (MLMY…VLFY), and 88–108 (IFMV…VLIA). Arg139 is a binding site for a 1,2-diacyl-sn-glycero-3-phospho-(1'-sn-glycerol). The helical transmembrane segment at 258–278 (MGQWLSLPMIVIGVALLVFFG) threads the bilayer.

The protein belongs to the Lgt family.

It is found in the cell inner membrane. The enzyme catalyses L-cysteinyl-[prolipoprotein] + a 1,2-diacyl-sn-glycero-3-phospho-(1'-sn-glycerol) = an S-1,2-diacyl-sn-glyceryl-L-cysteinyl-[prolipoprotein] + sn-glycerol 1-phosphate + H(+). It functions in the pathway protein modification; lipoprotein biosynthesis (diacylglyceryl transfer). In terms of biological role, catalyzes the transfer of the diacylglyceryl group from phosphatidylglycerol to the sulfhydryl group of the N-terminal cysteine of a prolipoprotein, the first step in the formation of mature lipoproteins. In Chromobacterium violaceum (strain ATCC 12472 / DSM 30191 / JCM 1249 / CCUG 213 / NBRC 12614 / NCIMB 9131 / NCTC 9757 / MK), this protein is Phosphatidylglycerol--prolipoprotein diacylglyceryl transferase.